Reading from the N-terminus, the 161-residue chain is MPSFDTVCEPNLPEVKNAVENTAKEIATRFDFKGTAAAVELKDKEITMIGDAEFQLVQVEDILRAKLTKRSVDVRFLDKGDVQKIGGDKVKQVIKVKSGIESEQAKKITRIIKDSKLKVQAAIQGDAVRITGAKRDDLQAAMALIKKDVPDMPLSFNNFRD.

The protein belongs to the YajQ family.

In terms of biological role, nucleotide-binding protein. This Variovorax paradoxus (strain S110) protein is Nucleotide-binding protein Vapar_3769.